A 271-amino-acid polypeptide reads, in one-letter code: Phosphatidylinositol transfer protein beta isoform (271 aa).

Position 215 is an N6-acetyllysine (K215). A Phosphoserine modification is found at S262.

This sequence belongs to the PtdIns transfer protein family. PI transfer class I subfamily. Constitutive phosphorylation of Ser-262 has no effect on phospholipid transfer activity but is required for Golgi targeting.

Its subcellular location is the golgi apparatus. The protein resides in the golgi apparatus membrane. The protein localises to the endoplasmic reticulum membrane. The catalysed reaction is a 1,2-diacyl-sn-glycero-3-phosphocholine(in) = a 1,2-diacyl-sn-glycero-3-phosphocholine(out). It catalyses the reaction a 1,2-diacyl-sn-glycero-3-phospho-(1D-myo-inositol)(in) = a 1,2-diacyl-sn-glycero-3-phospho-(1D-myo-inositol)(out). It carries out the reaction an N-(acyl)-sphingosylphosphocholine(in) = an N-(acyl)-sphingosylphosphocholine(out). Functionally, catalyzes the transfer of phosphatidylinositol, phosphatidylcholine and sphingomyelin between membranes. Required for COPI-mediated retrograde transport from the Golgi to the endoplasmic reticulum; phosphatidylinositol and phosphatidylcholine transfer activity is essential for this function. In Bos taurus (Bovine), this protein is Phosphatidylinositol transfer protein beta isoform (PITPNB).